The primary structure comprises 619 residues: Replication restart protein PriA (619 aa).

One can recognise a Helicase ATP-binding domain in the interval 119–285 (LKELQKHPAS…KDKALVRLKG (167 aa)). Residue 132-139 (GDTGSGKT) participates in ATP binding. Positions 228 to 231 (DEEH) match the DEAH box motif. 8 residues coordinate Zn(2+): Cys-336, Cys-339, Cys-345, Cys-348, Cys-363, Cys-366, Cys-376, and Cys-379. The Helicase C-terminal domain occupies 371 to 532 (PIPKICNACQ…ELYPPFSRLC (162 aa)).

Belongs to the helicase family. PriA subfamily. As to quaternary structure, component of the replication restart primosome. The cofactor is Zn(2+).

The enzyme catalyses Couples ATP hydrolysis with the unwinding of duplex DNA by translocating in the 3'-5' direction.. It catalyses the reaction ATP + H2O = ADP + phosphate + H(+). Initiates the restart of stalled replication forks, which reloads the replicative helicase on sites other than the origin of replication. Recognizes and binds to abandoned replication forks and remodels them to uncover a helicase loading site. Promotes assembly of the primosome at these replication forks. The protein is Replication restart protein PriA of Helicobacter pylori (strain J99 / ATCC 700824) (Campylobacter pylori J99).